Here is an 805-residue protein sequence, read N- to C-terminus: Muscarinic acetylcholine receptor DM1 (805 aa).

The Extracellular portion of the chain corresponds to 1–100; sequence MEPVMSLALA…GFETKGPRYS (100 aa). Low complexity predominate over residues 27 to 43; that stretch reads TSTTTTTTTTTSTTTTT. Residues 27–47 are disordered; it reads TSTTTTTTTTTSTTTTTASPA. N-linked (GlcNAc...) asparagine glycosylation is found at Asn65, Asn84, and Asn87. Residues 101–121 form a helical membrane-spanning segment; sequence LASMVVMGFVAAILSTVTVAG. Topologically, residues 122–141 are cytoplasmic; sequence NVMVMISFKIDKQLQTISNY. A helical membrane pass occupies residues 142-162; it reads FLFSLAIADFAIGAISMPLFA. The Extracellular portion of the chain corresponds to 163–177; it reads VTTILGYWPLGPIVC. The chain crosses the membrane as a helical span at residues 178-198; that stretch reads DTWLALDYLASNASVLNLLII. Residues 199 to 220 are Cytoplasmic-facing; the sequence is SFDRYFSVTRPLTYRAKRTTNR. The chain crosses the membrane as a helical span at residues 221 to 241; it reads AAVMIGAAWGISLLLWPPWIY. Over 242 to 266 the chain is Extracellular; sequence SWPYIEGKRTVPKDECYIQFIETNQ. The helical transmembrane segment at 267 to 287 threads the bilayer; that stretch reads YITFGTALAAFYFPVTIMCFL. At 288–718 the chain is on the cytoplasmic side; the sequence is YWRIWRETKK…KRQESKAAKT (431 aa). 3 disordered regions span residues 302–322, 340–359, and 507–530; these read LPNL…SDEN, GNDH…DAES, and GNGN…VNGN. 2 stretches are compositionally biased toward basic and acidic residues: residues 308 to 318 and 341 to 353; these read GKKDSSKRSNS and NDHD…RSES. The segment covering 507-525 has biased composition (low complexity); sequence GNGNGAINNNNNASHNGNG. The helical transmembrane segment at 719 to 739 threads the bilayer; the sequence is LSAILLSFIITWTPYNILVLI. Topologically, residues 740–752 are extracellular; that stretch reads KPLTTCSDCIPTE. Residues 753–773 form a helical membrane-spanning segment; the sequence is LWDFFYALCYINSTINPMCYA. At 774-805 the chain is on the cytoplasmic side; that stretch reads LCNATFRRTYVRILTCKWHTRNREGMVRGVYN.

It belongs to the G-protein coupled receptor 1 family. Muscarinic acetylcholine receptor subfamily. In terms of tissue distribution, intense staining in the glomeruli of the antennal lobes, the region of the nervous system containing terminals of antennal olfactory sensory neurons and mechanosensory neurons. Also a discrete group of neurosecretory cells in the pars intercerebralis of the brain.

The protein resides in the cell membrane. It localises to the postsynaptic cell membrane. In terms of biological role, the muscarinic acetylcholine receptor mediates various cellular responses, including inhibition of adenylate cyclase, breakdown of phosphoinositides and modulation of potassium channels through the action of G proteins. Primary transducing effect is Pi turnover. May have a role in the processing of olfactory and mechanosensory signals; regulation of neurosecretion. The sequence is that of Muscarinic acetylcholine receptor DM1 (mAChR-A) from Drosophila melanogaster (Fruit fly).